The primary structure comprises 1240 residues: DNA polymerase catalytic subunit (1240 aa).

Low complexity predominate over residues 1–26 (MFCAAGGPASPGGKSAARAASGFFAP). Disordered regions lie at residues 1 to 65 (MFCA…PAQR), 646 to 695 (GLDK…RETG), and 1103 to 1139 (AAAPGDEPAPPAALPSPAKRPRETPSHADPPGGASKP). Positions 44-56 (NFYNPHLAQTGTQ) are enriched in polar residues. Residues 669 to 688 (NGDEDKDDDEDGDEDGDERE) show a composition bias toward acidic residues.

This sequence belongs to the DNA polymerase type-B family. In terms of assembly, forms a complex with the ssDNA-binding protein UL29, the DNA polymerase processivity factor, and the alkaline exonuclease. Interacts with the putative helicase-primase complex subunit UL8; this interaction may coordinate leading and lagging strand DNA synthesis at the replication fork.

The protein resides in the host nucleus. It catalyses the reaction DNA(n) + a 2'-deoxyribonucleoside 5'-triphosphate = DNA(n+1) + diphosphate. The enzyme catalyses Endonucleolytic cleavage to 5'-phosphomonoester.. Functionally, replicates viral genomic DNA. The replication complex is composed of six viral proteins: the DNA polymerase, processivity factor, primase, primase-associated factor, helicase, and ssDNA-binding protein. Additionally, the polymerase contains an intrinsic ribonuclease H (RNase H) activity that specifically degrades RNA/DNA heteroduplexes or duplex DNA substrates in the 5' to 3' direction. Therefore, it can catalyze the excision of the RNA primers that initiate the synthesis of Okazaki fragments at a replication fork during viral DNA replication. This chain is DNA polymerase catalytic subunit, found in Human herpesvirus 2 (strain 186) (HHV-2).